A 171-amino-acid chain; its full sequence is UPF0398 protein MGAS10270_Spy1470 (171 aa).

It belongs to the UPF0398 family.

The sequence is that of UPF0398 protein MGAS10270_Spy1470 from Streptococcus pyogenes serotype M2 (strain MGAS10270).